Consider the following 546-residue polypeptide: Choline/ethanolamine transporter FLVCR2 (546 aa).

Residues 1–84 are disordered; that stretch reads MVNESLNQEE…TLAQPSGLTH (84 aa). Residues 1 to 93 lie on the Cytoplasmic side of the membrane; the sequence is MVNESLNQEE…HPNELVKEDS (93 aa). The segment covering 22 to 49 has biased composition (polar residues); that stretch reads QADTSYSTQPSVSIHPSVSGHPSVSIHP. 7 repeat units span residues 31–36, 37–42, 43–48, 49–54, 55–60, 61–66, and 67–72. Residues 31-84 are 9 X 6 AA tandem repeats of P-S-[VS]-S-[VIAG]-[HD]; that stretch reads PSVSIHPSVSGHPSVSIHPSVSGHPSVSIDPSVSVHPSSSAHPSTLAQPSGLTH. Over residues 54–74 the composition is skewed to low complexity; sequence HPSVSIDPSVSVHPSSSAHPS. An 8; approximate repeat occupies 73–78; the sequence is PSTLAQ. A 9; approximate repeat occupies 79-84; that stretch reads PSGLTH. Residues 94 to 118 form a helical membrane-spanning segment; that stretch reads VIKVSKRRWAVVLVFSCYSLCNAFQ. Positions 115, 116, and 119 each coordinate choline. The Extracellular segment spans residues 119-136; the sequence is WIQYGSINNIFMNFYGVS. A helical transmembrane segment spans residues 137-164; sequence AFAIDWLSMCYMLTYIPLLLPVAWMLEK. Over 165 to 166 the chain is Cytoplasmic; that stretch reads FG. Residues 167–186 traverse the membrane as a helical segment; sequence LRTIAITGSALNCLGAWVKL. The Extracellular segment spans residues 187–193; it reads GSLEPHL. The helical transmembrane segment at 194 to 222 threads the bilayer; sequence FPVTMVGQVICSVAQVFILGMPSRIASVW. A choline-binding site is contributed by Leu212. The Cytoplasmic segment spans residues 223-227; sequence FGANE. A helical transmembrane segment spans residues 228–253; that stretch reads VSTACSMAVFGNQLGIAIGFLVPPVL. The Extracellular portion of the chain corresponds to 254-258; sequence VPNIK. The chain crosses the membrane as a helical span at residues 259 to 288; that stretch reads DQEKLAYHISIMFYIIGGVATLLFILVIIV. Residues 289–324 lie on the Cytoplasmic side of the membrane; the sequence is FKEKPKYPPSRAQSLSYALATTDASYLSSIVRLFKN. Residues 325–355 traverse the membrane as a helical segment; the sequence is LNFVLLVITYGLNAGAFYALSTLLNRMVIMH. A choline-binding site is contributed by Tyr342. Residues 356-359 are Extracellular-facing; the sequence is FPGQ. Residues 360 to 388 traverse the membrane as a helical segment; it reads EVNAGRIGLTIVIAGMFGAMISGIWLDKS. The Cytoplasmic segment spans residues 389–390; sequence KT. A helical transmembrane segment spans residues 391-413; that stretch reads YKETTLVVYIMTLVGMVVYTFTL. The Extracellular segment spans residues 414 to 416; the sequence is NLN. The chain crosses the membrane as a helical span at residues 417 to 446; the sequence is HLWIVFITADSLGFFMTGYLPLGFEFAVEL. Residues 447–454 are Cytoplasmic-facing; sequence TYPESEGV. The helical transmembrane segment at 455-480 threads the bilayer; that stretch reads SSGLLNVSAQVFGIIFTISQGQIIDN. A choline-binding site is contributed by Gln464. Topologically, residues 481–482 are extracellular; sequence YG. The helical transmembrane segment at 483 to 505 threads the bilayer; it reads SVPGNIFLCVFLALGSALTAFIK. Topologically, residues 506-546 are cytoplasmic; the sequence is SDLRRQRANKDAPETKVQEEEEEEEESNTSKVPTVLSEAHL. The segment covering 511 to 523 has biased composition (basic and acidic residues); it reads QRANKDAPETKVQ. Residues 511-546 form a disordered region; it reads QRANKDAPETKVQEEEEEEEESNTSKVPTVLSEAHL. Ser535 carries the post-translational modification Phosphoserine.

This sequence belongs to the major facilitator superfamily. Feline leukemia virus subgroup C receptor (TC 2.A.1.28.1) family. Interacts with components of electron transfer chain complexes III, IV and V including CYC1, NDUFA4, COX4I1, ATP5PD and ATP5F1C; these interactions occur in the absence of heme and are disrupted upon heme binding. Interacts with ATP2A2; this interaction occurs in the absence of heme and promotes ATP2A2 proteasomal degradation; the complex is dissociated upon heme binding. Interacts with HMOX1; this interaction is potentiated in the presence of heme.

Its subcellular location is the cell membrane. The protein localises to the mitochondrion membrane. It is found in the endoplasmic reticulum membrane. The enzyme catalyses choline(out) = choline(in). It carries out the reaction ethanolamine(in) = ethanolamine(out). It catalyses the reaction heme b(in) = heme b(out). Functionally, choline uniporter that specifically mediates choline uptake at the blood-brain-barrier. Responsible for the majority of choline uptake across the blood-brain-barrier from the circulation into the brain. Choline, a nutrient critical for brain development, is a precursor of phosphatidylcholine, as well as betaine. Also mediates transport of ethanolamine. Choline and ethanolamine transport is not coupled with proton transport and is exclusively driven by the choline gradient across the plasma membrane. However, the presence of an inwardly directed proton gradient enhances choline uptake. Also acts as a heme b transporter. Required to regulate mitochondrial respiration processes, ATP synthesis and thermogenesis. At low heme levels, interacts with components of electron transfer chain (ETC) complexes and ATP2A2, leading to ubiquitin-mediated degradation of ATP2A2 and inhibition of thermogenesis. Upon heme binding, dissociates from ETC complexes to allow switching from mitochondrial ATP synthesis to thermogenesis. This Rattus norvegicus (Rat) protein is Choline/ethanolamine transporter FLVCR2 (Flvcr2).